The sequence spans 185 residues: Ribosome-recycling factor (185 aa).

This sequence belongs to the RRF family.

The protein localises to the cytoplasm. Its function is as follows. Responsible for the release of ribosomes from messenger RNA at the termination of protein biosynthesis. May increase the efficiency of translation by recycling ribosomes from one round of translation to another. This chain is Ribosome-recycling factor, found in Campylobacter jejuni (strain RM1221).